We begin with the raw amino-acid sequence, 838 residues long: Probable inorganic carbon transporter subunit DabA (838 aa).

Cys-353, Asp-355, His-537, and Cys-552 together coordinate Zn(2+).

The protein belongs to the inorganic carbon transporter (TC 9.A.2) DabA family. As to quaternary structure, forms a complex with DabB. Zn(2+) is required as a cofactor.

It localises to the cell membrane. Part of an energy-coupled inorganic carbon pump. In Chloroflexus aurantiacus (strain ATCC 29366 / DSM 635 / J-10-fl), this protein is Probable inorganic carbon transporter subunit DabA.